Reading from the N-terminus, the 120-residue chain is Myohemerythrin (120 aa).

Fe cation contacts are provided by His-26, His-56, Glu-60, His-75, His-79, His-108, and Asp-113.

It belongs to the hemerythrin family.

Its function is as follows. Myohemerythrin is an oxygen-binding protein found in the retractor muscles of certain worms. The oxygen-binding site contains two iron atoms. This chain is Myohemerythrin, found in Riftia pachyptila (Vent tube worm).